We begin with the raw amino-acid sequence, 164 residues long: UPF0304 protein YfbU (164 aa).

It belongs to the UPF0304 family.

The protein is UPF0304 protein YfbU of Shigella flexneri.